The chain runs to 156 residues: Small ribosomal subunit protein uS7 (156 aa).

It belongs to the universal ribosomal protein uS7 family. As to quaternary structure, part of the 30S ribosomal subunit. Contacts proteins S9 and S11.

One of the primary rRNA binding proteins, it binds directly to 16S rRNA where it nucleates assembly of the head domain of the 30S subunit. Is located at the subunit interface close to the decoding center, probably blocks exit of the E-site tRNA. In Buchnera aphidicola subsp. Cinara cedri (strain Cc), this protein is Small ribosomal subunit protein uS7.